The chain runs to 263 residues: 3-methyl-2-oxobutanoate hydroxymethyltransferase (263 aa).

Mg(2+) contacts are provided by D45 and D84. Residues 45–46 (DS), D84, and K112 each bind 3-methyl-2-oxobutanoate. A Mg(2+)-binding site is contributed by E114. The active-site Proton acceptor is E181.

Belongs to the PanB family. As to quaternary structure, homodecamer; pentamer of dimers. The cofactor is Mg(2+).

The protein resides in the cytoplasm. It catalyses the reaction 3-methyl-2-oxobutanoate + (6R)-5,10-methylene-5,6,7,8-tetrahydrofolate + H2O = 2-dehydropantoate + (6S)-5,6,7,8-tetrahydrofolate. The protein operates within cofactor biosynthesis; (R)-pantothenate biosynthesis; (R)-pantoate from 3-methyl-2-oxobutanoate: step 1/2. Catalyzes the reversible reaction in which hydroxymethyl group from 5,10-methylenetetrahydrofolate is transferred onto alpha-ketoisovalerate to form ketopantoate. This Photorhabdus laumondii subsp. laumondii (strain DSM 15139 / CIP 105565 / TT01) (Photorhabdus luminescens subsp. laumondii) protein is 3-methyl-2-oxobutanoate hydroxymethyltransferase.